A 76-amino-acid chain; its full sequence is Small ribosomal subunit protein bS18 (76 aa).

This sequence belongs to the bacterial ribosomal protein bS18 family. Part of the 30S ribosomal subunit. Forms a tight heterodimer with protein bS6.

In terms of biological role, binds as a heterodimer with protein bS6 to the central domain of the 16S rRNA, where it helps stabilize the platform of the 30S subunit. This Petrotoga mobilis (strain DSM 10674 / SJ95) protein is Small ribosomal subunit protein bS18.